The chain runs to 257 residues: Putative hydro-lyase Bamb_5282 (257 aa).

It belongs to the D-glutamate cyclase family.

The protein is Putative hydro-lyase Bamb_5282 of Burkholderia ambifaria (strain ATCC BAA-244 / DSM 16087 / CCUG 44356 / LMG 19182 / AMMD) (Burkholderia cepacia (strain AMMD)).